Here is a 101-residue protein sequence, read N- to C-terminus: Large ribosomal subunit protein bL21 (101 aa).

This sequence belongs to the bacterial ribosomal protein bL21 family. As to quaternary structure, part of the 50S ribosomal subunit. Contacts protein L20.

This protein binds to 23S rRNA in the presence of protein L20. The sequence is that of Large ribosomal subunit protein bL21 from Corynebacterium glutamicum (strain R).